Reading from the N-terminus, the 277-residue chain is Putative pyruvate, phosphate dikinase regulatory protein (277 aa).

156–163 is a binding site for ADP; the sequence is GVSRTSKT.

Belongs to the pyruvate, phosphate/water dikinase regulatory protein family. PDRP subfamily.

The catalysed reaction is N(tele)-phospho-L-histidyl/L-threonyl-[pyruvate, phosphate dikinase] + ADP = N(tele)-phospho-L-histidyl/O-phospho-L-threonyl-[pyruvate, phosphate dikinase] + AMP + H(+). The enzyme catalyses N(tele)-phospho-L-histidyl/O-phospho-L-threonyl-[pyruvate, phosphate dikinase] + phosphate + H(+) = N(tele)-phospho-L-histidyl/L-threonyl-[pyruvate, phosphate dikinase] + diphosphate. Its function is as follows. Bifunctional serine/threonine kinase and phosphorylase involved in the regulation of the pyruvate, phosphate dikinase (PPDK) by catalyzing its phosphorylation/dephosphorylation. This Carboxydothermus hydrogenoformans (strain ATCC BAA-161 / DSM 6008 / Z-2901) protein is Putative pyruvate, phosphate dikinase regulatory protein.